We begin with the raw amino-acid sequence, 168 residues long: Variant surface antigen D (168 aa).

Residues 1–29 (MKKSIFSKKLLVSFGSLVTLAAIPLIAIS) form the signal peptide. Cys30 carries the N-palmitoyl cysteine lipid modification. Cys30 is lipidated: S-diacylglycerol cysteine. Residues 33 to 168 (TNTDQSQQPG…STSTSNMNTR (136 aa)) are disordered. 2 stretches are compositionally biased toward low complexity: residues 35-44 (TDQSQQPGSG) and 52-71 (GTTTGTDSTTGGQTGSESGT). Residues 72 to 81 (TTGGQTGTTT) are compositionally biased toward gly residues. 7 consecutive repeat copies span residues 81 to 92 (TGGQSDSTSTSK), 93 to 104 (EQGSSDSTSTSK), 105 to 116 (EQGSSDSTSTSK), 117 to 128 (EQGSSDSTSTSK), 129 to 140 (EQGSSDSTSTSK), 141 to 152 (EQGSSDSTSTSK), and 153 to 164 (EQGSSDSTSTSN). The interval 81-164 (TGGQSDSTST…GSSDSTSTSN (84 aa)) is 7 X 12 AA tandem repeats. Residues 82-168 (GGQSDSTSTS…STSTSNMNTR (87 aa)) show a composition bias toward low complexity.

It localises to the cell membrane. Its function is as follows. Responsible for the antigenic diversity for host adaptation. Expression in E.coli of a construct containing vlpD, vlpE, and vlpF yields antigenically distinguishable products corresponding to each gene. This chain is Variant surface antigen D (vlpD), found in Mesomycoplasma hyorhinis (Mycoplasma hyorhinis).